Consider the following 242-residue polypeptide: Probable proteasome subunit alpha type-7 (242 aa).

Belongs to the peptidase T1A family. The 26S proteasome consists of a 20S proteasome core and two 19S regulatory subunits. The 20S proteasome core is composed of 28 subunits that are arranged in four stacked rings, resulting in a barrel-shaped structure. The two end rings are each formed by seven alpha subunits, and the two central rings are each formed by seven beta subunits. The catalytic chamber with the active sites is on the inside of the barrel.

Its subcellular location is the cytoplasm. It localises to the nucleus. In terms of biological role, the proteasome degrades poly-ubiquitinated proteins in the cytoplasm and in the nucleus. It is essential for the regulated turnover of proteins and for the removal of misfolded proteins. The proteasome is a multicatalytic proteinase complex that is characterized by its ability to cleave peptides with Arg, Phe, Tyr, Leu, and Glu adjacent to the leaving group at neutral or slightly basic pH. It has an ATP-dependent proteolytic activity. The chain is Probable proteasome subunit alpha type-7 (PRE10) from Encephalitozoon cuniculi (strain GB-M1) (Microsporidian parasite).